Consider the following 41-residue polypeptide: Bacteriocin bavaricin-A (41 aa).

This sequence belongs to the bacteriocin class IIA/YGNGV family.

It localises to the secreted. Functionally, this heat stable bacteriocin shows activity against species of Lactobacillus, Listeria monocytogenes, Pediococcus, Enterococcus, Leuconostoc and Lactococcus. In Latilactobacillus sakei (Lactobacillus sakei), this protein is Bacteriocin bavaricin-A.